We begin with the raw amino-acid sequence, 499 residues long: Type-1 glutamine synthetase 1 (499 aa).

The GS beta-grasp domain maps to Pro50–Asn146. Positions Pro158 to Phe499 constitute a GS catalytic domain.

It belongs to the glutamine synthetase family.

It carries out the reaction L-glutamate + NH4(+) + ATP = L-glutamine + ADP + phosphate + H(+). In Dictyostelium discoideum (Social amoeba), this protein is Type-1 glutamine synthetase 1 (glnA1).